We begin with the raw amino-acid sequence, 458 residues long: Chromosomal replication initiator protein DnaA (458 aa).

Residues 1 to 84 are domain I, interacts with DnaA modulators; the sequence is MENIWLEAQT…FHVAEEKPEA (84 aa). Over residues 80–119 the composition is skewed to basic and acidic residues; it reads EKPEAAHEAKPEKEAKPAREKERDKDKEKEKDREKEKKEL. Residues 80–120 form a disordered region; that stretch reads EKPEAAHEAKPEKEAKPAREKERDKDKEKEKDREKEKKELV. Residues 84–121 are domain II; it reads AAHEAKPEKEAKPAREKERDKDKEKEKDREKEKKELVP. Positions 122–338 are domain III, AAA+ region; the sequence is NLNPKYTFES…GMLIRLEAFA (217 aa). The ATP site is built by Gly-166, Gly-168, Lys-169, and Thr-170. The tract at residues 339 to 458 is domain IV, binds dsDNA; it reads SLTGQEITLS…VEDIRKKLFT (120 aa).

It belongs to the DnaA family. As to quaternary structure, oligomerizes as a right-handed, spiral filament on DNA at oriC.

It localises to the cytoplasm. Functionally, plays an essential role in the initiation and regulation of chromosomal replication. ATP-DnaA binds to the origin of replication (oriC) to initiate formation of the DNA replication initiation complex once per cell cycle. Binds the DnaA box (a 9 base pair repeat at the origin) and separates the double-stranded (ds)DNA. Forms a right-handed helical filament on oriC DNA; dsDNA binds to the exterior of the filament while single-stranded (ss)DNA is stabiized in the filament's interior. The ATP-DnaA-oriC complex binds and stabilizes one strand of the AT-rich DNA unwinding element (DUE), permitting loading of DNA polymerase. After initiation quickly degrades to an ADP-DnaA complex that is not apt for DNA replication. Binds acidic phospholipids. The polypeptide is Chromosomal replication initiator protein DnaA (Citrifermentans bemidjiense (strain ATCC BAA-1014 / DSM 16622 / JCM 12645 / Bem) (Geobacter bemidjiensis)).